The sequence spans 843 residues: OTU domain-containing protein 7B (843 aa).

The tract at residues 50–88 is disordered; sequence GNLPPSFSEGSGGSRTPEKGFSDREPTRPPRPILQRQDD. Basic and acidic residues predominate over residues 65-77; that stretch reads TPEKGFSDREPTR. Ser-100 is modified (phosphoserine). The tract at residues 152–401 is TRAF-binding; it reads ERDLIEQSML…AVDPGKGWEW (250 aa). A catalytic region spans residues 167–440; that stretch reads AGRLNWWVSV…VKWIPLSSDA (274 aa). Residues 183–365 form the OTU domain; the sequence is LLPLATTGDG…QAHFSALVSM (183 aa). The segment at 187–193 is regulatory loop; the sequence is ATTGDGN. Residue Asp-191 is part of the active site. The Nucleophile role is filled by Cys-194. Catalysis depends on His-358, which acts as the Proton acceptor. Disordered regions lie at residues 442-587 and 652-711; these read APLA…GGSK and IMNG…CQEP. Composition is skewed to basic and acidic residues over residues 456-471 and 488-500; these read DEPR…DKES and SKRD…KRAD. Ser-464, Ser-467, and Ser-471 each carry phosphoserine. Residues 483–498 carry the Nuclear localization signal motif; that stretch reads RRKEKSKRDREKDKKR. The segment covering 531–543 has biased composition (gly residues); the sequence is KPGGVGTGLGGSS. A compositionally biased stretch (basic and acidic residues) spans 665–675; the sequence is KKPEPDAREEQ. Thr-729 is subject to Phosphothreonine. The segment at 732 to 792 is disordered; it reads RQCPPGRPYP…PEPDGWAGGL (61 aa). Residues 796–831 form an A20-type zinc finger; the sequence is PPTQTKCKQPNCSFYGHPETNNFCSCCYREELRRRE. Residues Cys-802, Cys-807, Cys-819, and Cys-822 each coordinate Zn(2+).

Belongs to the peptidase C64 family. In terms of assembly, interacts with ZAP70 in activated T cells, but not in resting T cells. Interacts with TRAF3. Interacts with TRAF6. Interacts with PARK7, leading to inhibit deubiquitinase activity. Interacts with EGFR, ITCH and NEDD4. Phosphorylated by EGFR. Widely expressed. Abundant in kidney, heart and fetal liver. Expressed differentially among B-cells at distinct developmental stages. Higher expression seen in primary immature B-cells as compared to the mature cells.

The protein resides in the cytoplasm. Its subcellular location is the nucleus. The enzyme catalyses Thiol-dependent hydrolysis of ester, thioester, amide, peptide and isopeptide bonds formed by the C-terminal Gly of ubiquitin (a 76-residue protein attached to proteins as an intracellular targeting signal).. With respect to regulation, deubiquitinase activity is inhibited following interaction with PARK7. In terms of biological role, negative regulator of the non-canonical NF-kappa-B pathway that acts by mediating deubiquitination of TRAF3, an inhibitor of the NF-kappa-B pathway, thereby acting as a negative regulator of B-cell responses. In response to non-canonical NF-kappa-B stimuli, deubiquitinates 'Lys-48'-linked polyubiquitin chains of TRAF3, preventing TRAF3 proteolysis and over-activation of non-canonical NF-kappa-B. Negatively regulates mucosal immunity against infections. Deubiquitinates ZAP70, and thereby regulates T cell receptor (TCR) signaling that leads to the activation of NF-kappa-B. Plays a role in T cell homeostasis and is required for normal T cell responses, including production of IFNG and IL2. Mediates deubiquitination of EGFR. Has deubiquitinating activity toward 'Lys-11', 'Lys-48' and 'Lys-63'-linked polyubiquitin chains. Has a much higher catalytic rate with 'Lys-11'-linked polyubiquitin chains (in vitro); however the physiological significance of these data are unsure. Hydrolyzes both linear and branched forms of polyubiquitin. Acts as a regulator of mTORC1 and mTORC2 assembly by mediating 'Lys-63'-linked deubiquitination of MLST8, thereby promoting assembly of the mTORC2 complex, while inibiting formation of the mTORC1 complex. This chain is OTU domain-containing protein 7B (OTUD7B), found in Homo sapiens (Human).